Here is a 300-residue protein sequence, read N- to C-terminus: Putative hydro-lyase Dshi_3152 (300 aa).

This sequence belongs to the D-glutamate cyclase family.

The chain is Putative hydro-lyase Dshi_3152 from Dinoroseobacter shibae (strain DSM 16493 / NCIMB 14021 / DFL 12).